The following is a 259-amino-acid chain: tRNA-cytidine(32) 2-sulfurtransferase (259 aa).

The short motif at 40-45 (SGGKDS) is the PP-loop motif element. C114, C117, and C205 together coordinate [4Fe-4S] cluster.

The protein belongs to the TtcA family. As to quaternary structure, homodimer. The cofactor is Mg(2+). [4Fe-4S] cluster serves as cofactor.

It localises to the cytoplasm. It carries out the reaction cytidine(32) in tRNA + S-sulfanyl-L-cysteinyl-[cysteine desulfurase] + AH2 + ATP = 2-thiocytidine(32) in tRNA + L-cysteinyl-[cysteine desulfurase] + A + AMP + diphosphate + H(+). It participates in tRNA modification. Its function is as follows. Catalyzes the ATP-dependent 2-thiolation of cytidine in position 32 of tRNA, to form 2-thiocytidine (s(2)C32). The sulfur atoms are provided by the cysteine/cysteine desulfurase (IscS) system. In Bdellovibrio bacteriovorus (strain ATCC 15356 / DSM 50701 / NCIMB 9529 / HD100), this protein is tRNA-cytidine(32) 2-sulfurtransferase.